The chain runs to 438 residues: Serine hydroxymethyltransferase (438 aa).

(6S)-5,6,7,8-tetrahydrofolate is bound by residues Leu-133 and Gly-137–Leu-139. Residue Lys-242 is modified to N6-(pyridoxal phosphate)lysine.

Belongs to the SHMT family. Homodimer. Pyridoxal 5'-phosphate is required as a cofactor.

The protein localises to the cytoplasm. The catalysed reaction is (6R)-5,10-methylene-5,6,7,8-tetrahydrofolate + glycine + H2O = (6S)-5,6,7,8-tetrahydrofolate + L-serine. It participates in one-carbon metabolism; tetrahydrofolate interconversion. It functions in the pathway amino-acid biosynthesis; glycine biosynthesis; glycine from L-serine: step 1/1. Its function is as follows. Catalyzes the reversible interconversion of serine and glycine with tetrahydrofolate (THF) serving as the one-carbon carrier. This reaction serves as the major source of one-carbon groups required for the biosynthesis of purines, thymidylate, methionine, and other important biomolecules. Also exhibits THF-independent aldolase activity toward beta-hydroxyamino acids, producing glycine and aldehydes, via a retro-aldol mechanism. This Brucella ovis (strain ATCC 25840 / 63/290 / NCTC 10512) protein is Serine hydroxymethyltransferase.